Consider the following 60-residue polypeptide: Large ribosomal subunit protein uL30 (60 aa).

This sequence belongs to the universal ribosomal protein uL30 family. As to quaternary structure, part of the 50S ribosomal subunit.

The sequence is that of Large ribosomal subunit protein uL30 from Streptococcus pneumoniae serotype 2 (strain D39 / NCTC 7466).